The sequence spans 249 residues: Vacuolar iron transporter homolog 3 (249 aa).

Positions 1-32 (MAMQMNSVVHVSTSPSPSPATSPPPEGKQEHG) are disordered. The Cytoplasmic portion of the chain corresponds to 1-74 (MAMQMNSVVH…SGRAQWLRAA (74 aa)). Pro residues predominate over residues 16–26 (SPSPATSPPPE). Residues 75-95 (VLGANDGLVSVASLMIGVGAV) traverse the membrane as a helical segment. At 96–102 (SESGRAM) the chain is on the vacuolar side. The helical transmembrane segment at 103-123 (LVSGVAGLVAGACSMAIGEFV) threads the bilayer. Topologically, residues 124–166 (SVYAQYDIEVAAARRRRRQRRRRCDGDGEEEGSGRLPSPFKAA) are cytoplasmic. The chain crosses the membrane as a helical span at residues 167-187 (AASALAFTVGALLPLLAGGFV). Residues 188–193 (RPWAPR) lie on the Vacuolar side of the membrane. Residues 194-214 (VAAVCAATSAALAGFGALGAA) form a helical membrane-spanning segment. The Cytoplasmic portion of the chain corresponds to 215 to 226 (LGGASPARSAAR). A helical membrane pass occupies residues 227–247 (VLLGGWAAMAACYGVLRLFAN). The Vacuolar segment spans residues 248-249 (LY).

The protein belongs to the CCC1 family.

It is found in the vacuole membrane. It carries out the reaction Fe(2+)(in) = Fe(2+)(out). Functionally, probable vacuolar iron transporter that may be involved in the regulation of iron distribution throughout the plant. This chain is Vacuolar iron transporter homolog 3, found in Oryza sativa subsp. japonica (Rice).